The chain runs to 314 residues: tRNA pseudouridine synthase B (314 aa).

The Nucleophile role is filled by D54.

Belongs to the pseudouridine synthase TruB family. Type 1 subfamily.

The enzyme catalyses uridine(55) in tRNA = pseudouridine(55) in tRNA. Responsible for synthesis of pseudouridine from uracil-55 in the psi GC loop of transfer RNAs. The protein is tRNA pseudouridine synthase B of Ralstonia nicotianae (strain ATCC BAA-1114 / GMI1000) (Ralstonia solanacearum).